Consider the following 75-residue polypeptide: Conotoxin TsMEKL-011 (75 aa).

The signal sequence occupies residues 1–19 (MEKLTILLLVAAVLMSTQA). A propeptide spanning residues 20 to 45 (LIQRGGAKRRKVNFFSIREPGAEDWR) is cleaved from the precursor. Intrachain disulfides connect cysteine 49-cysteine 63, cysteine 56-cysteine 67, and cysteine 62-cysteine 71.

The protein belongs to the conotoxin O2 superfamily. Expressed by the venom duct.

Its subcellular location is the secreted. The protein is Conotoxin TsMEKL-011 of Conus tessulatus (Tessellate cone).